A 771-amino-acid polypeptide reads, in one-letter code: Rho GTPase-activating protein 26 (771 aa).

In terms of domain architecture, BAR spans 7–262; the sequence is EFSDCYLDSP…MKENPHEHLA (256 aa). Positions 265 to 369 constitute a PH domain; sequence PFTMEGYLYV…WMEAMDGREP (105 aa). In terms of domain architecture, Rho-GAP spans 383–568; it reads AQLDNIGFSI…IIIENYEEMF (186 aa). Residues 575–712 are disordered; sequence PQTNSQLHLS…SSTSSDSSPV (138 aa). The segment covering 608–617 has biased composition (basic and acidic residues); that stretch reads HSSEKEEKRN. Residues 618-637 are compositionally biased toward low complexity; that stretch reads SVNSSAESVSSSNANSSVNS. Polar residues-rich tracts occupy residues 638-650 and 662-671; these read TCTQ…NLNA and RPNSLLNPKN. 2 stretches are compositionally biased toward low complexity: residues 673–683 and 691–712; these read SGLLPSSLNPS and PMVS…SSPV. An SH3 domain is found at 713-771; that stretch reads SVPRKAKALYACKAEHDSELSFSAGTVFENVCPSQEPGWLEGTLNGKTGLIPENYVEFL.

It localises to the cell junction. Its subcellular location is the focal adhesion. It is found in the cytoplasm. The protein resides in the cytoskeleton. The protein localises to the endosome membrane. In terms of biological role, GTPase-activating protein for rhoa and cdc42. May be involved in the regulation of neosynthesized protein export through a Rab-endososomal dependent export route. The chain is Rho GTPase-activating protein 26 (arhgap26) from Xenopus laevis (African clawed frog).